We begin with the raw amino-acid sequence, 78 residues long: Large ribosomal subunit protein bL31 (78 aa).

This sequence belongs to the bacterial ribosomal protein bL31 family. Type A subfamily. As to quaternary structure, part of the 50S ribosomal subunit.

Binds the 23S rRNA. This is Large ribosomal subunit protein bL31 from Rickettsia prowazekii (strain Madrid E).